A 648-amino-acid chain; its full sequence is Translation factor GUF1 homolog, mitochondrial (648 aa).

The 193-residue stretch at 55-247 (ERVRNFSIIA…AVIERIPSPP (193 aa)) folds into the tr-type G domain. GTP contacts are provided by residues 64–71 (AHVDHGKS), 140–144 (DTPGH), and 194–197 (NKID).

The protein belongs to the TRAFAC class translation factor GTPase superfamily. Classic translation factor GTPase family. LepA subfamily.

Its subcellular location is the mitochondrion inner membrane. It catalyses the reaction GTP + H2O = GDP + phosphate + H(+). Functionally, promotes mitochondrial protein synthesis. May act as a fidelity factor of the translation reaction, by catalyzing a one-codon backward translocation of tRNAs on improperly translocated ribosomes. Binds to mitochondrial ribosomes in a GTP-dependent manner. The sequence is that of Translation factor GUF1 homolog, mitochondrial from Oryza sativa subsp. indica (Rice).